The following is a 149-amino-acid chain: Large ribosomal subunit protein bL9 (149 aa).

It belongs to the bacterial ribosomal protein bL9 family.

Functionally, binds to the 23S rRNA. The protein is Large ribosomal subunit protein bL9 of Helicobacter pylori (strain G27).